We begin with the raw amino-acid sequence, 649 residues long: Extracellular metalloproteinase 4 (649 aa).

The signal sequence occupies residues 1–18; it reads MHGLLLAGLLALPSNVLG. A propeptide spanning residues 19–260 is cleaved from the precursor; it reads HPAEPPNSVN…VHGVVDYVAS (242 aa). His-443 contacts Zn(2+). Glu-444 is an active-site residue. Zn(2+) is bound at residue His-447. N-linked (GlcNAc...) asparagine glycans are attached at residues Asn-494 and Asn-609.

This sequence belongs to the peptidase M36 family. The cofactor is Zn(2+).

The protein localises to the secreted. In terms of biological role, secreted metalloproteinase probably acting as a virulence factor. This is Extracellular metalloproteinase 4 (MEP4) from Arthroderma otae (strain ATCC MYA-4605 / CBS 113480) (Microsporum canis).